An 806-amino-acid polypeptide reads, in one-letter code: DEP domain-containing protein 1A (806 aa).

Residues 24–108 (FRAAMPLRKH…DNNSLYRFPS (85 aa)) enclose the DEP domain. The disordered stretch occupies residues 142–177 (QFSKKTPKRRASVDSKEEQENEDLMEDQRNDDDFPK). The segment covering 167-177 (EDQRNDDDFPK) has biased composition (basic and acidic residues). The Rho-GAP domain occupies 279-319 (DYFLNLPEPLLTFEFYELFVNILVVCGYITVPNSHNGKHRF). The disordered stretch occupies residues 564 to 588 (SHSSFPSTSSLLPPTTSPNSTGSES).

The sequence is that of DEP domain-containing protein 1A (depdc1a) from Xenopus laevis (African clawed frog).